We begin with the raw amino-acid sequence, 572 residues long: Serine/threonine-protein kinase pak-1 (572 aa).

Disordered stretches follow at residues 1–71 (MKAF…SRPS) and 156–195 (QPYS…QGVP). One can recognise a CRIB domain in the interval 67–80 (ISRPSNFEHTIHVG). Positions 81–294 (YDPKTGEFTG…IVSIGNPDRK (214 aa)) are linker. A compositionally biased stretch (polar residues) spans 178-195 (PMTTSTSSAGYNSKQGVP). The 252-residue stretch at 295–546 (YRKVDKIGSG…ASQLLTHPFL (252 aa)) folds into the Protein kinase domain. ATP-binding positions include 301 to 309 (IGSGASGSV) and lysine 324. Aspartate 414 acts as the Proton acceptor in catalysis.

It belongs to the protein kinase superfamily. STE Ser/Thr protein kinase family. STE20 subfamily. In terms of assembly, interacts with cdc-42 (GTP-bound form) and cedd-10 (GTP-bound form). Mg(2+) is required as a cofactor. The cofactor is Mn(2+). As to expression, specifically colocalized with cdc-42 and ced-10 at all hypodermal cell boundaries during embryo elongation throughout the second phase of embryogenesis. Expressed mainly in pharyngeal muscles, the CAN neurons, motor neurons in the ventral nerve cord, several cells in the tail region (including the B and Y cells from L1 to adult, the hypodermal blast cell T in the L1 and some of its progeny in later stages), and the distal tip cells.

The protein localises to the cell membrane. Its subcellular location is the cytoplasm. It localises to the cell projection. It is found in the axon. The protein resides in the perikaryon. The catalysed reaction is L-seryl-[protein] + ATP = O-phospho-L-seryl-[protein] + ADP + H(+). It catalyses the reaction L-threonyl-[protein] + ATP = O-phospho-L-threonyl-[protein] + ADP + H(+). Its function is as follows. Required for hypodermal cell fusion, together with cdc-42 and ced-10, leading to embryonic body elongation, which involves dramatic cytoskeletal reorganization. Plays a redundant role with max-2 in dorsal axonal guidance in ventral cord commissural motoneurons and in P neuroblast migration. Acts probably downstream of Rho GTPases mig-2 and ced-10 to regulate these 2 processes. Involved in orientating axonal growth of HSN neurons. During gonad morphogenesis and probably in association with pix-1 and git-1, involved in the migration of distal tip cell (DTC) and in maintaining their sharp tapering morphology. In addition, plays a redundant role with max-2 in DTC-mediated guidance of gonad elongation. May phosphorylate mlc-4. The polypeptide is Serine/threonine-protein kinase pak-1 (pak-1) (Caenorhabditis elegans).